Here is a 380-residue protein sequence, read N- to C-terminus: Putative RNA ligase (380 aa).

Putative RNA ligase. Is able to catalyze the adenylation reaction of ssDNA 3'-terminal phosphate (ssDNA 3'p) to 3'-adenylated DNA (ssDNA 3'pp5'A). The polypeptide is Putative RNA ligase (Thermovibrio ammonificans (strain DSM 15698 / JCM 12110 / HB-1)).